The chain runs to 327 residues: Nuclear apoptosis-inducing factor 1 (327 aa).

Residues 1–70 form a required for nuclear localization and apoptosis-inducing activity region; that stretch reads MAVPAKKRKM…CRRELPEVKK (70 aa). Positions 88 to 98 are enriched in low complexity; sequence AAVEGGEAPGP. Disordered stretches follow at residues 88–118 and 303–327; these read AAVE…AGGP and NMPN…SIIQ. Positions 104 to 117 are enriched in gly residues; that stretch reads AGGPGTGGGSGAGG. Polar residues predominate over residues 316–327; that stretch reads VAQNGQPDSIIQ.

It belongs to the NAIF1 family. Interacts with HARBI1.

Its subcellular location is the nucleus. Its function is as follows. Induces apoptosis. This Bos taurus (Bovine) protein is Nuclear apoptosis-inducing factor 1 (NAIF1).